Reading from the N-terminus, the 516-residue chain is DNA topoisomerase large subunit (516 aa).

ATP is bound at residue 128–136; sequence VTGGMNGVG. Residues 369 to 400 mediate DNA binding; sequence AALARKLAAEKAAETKAAKKASKAKVHKHIKA.

This sequence belongs to the type II topoisomerase family. As to quaternary structure, part of the DNA topoisomerase complex made of gp39, gp52 and gp60. Requires Mg(2+) as cofactor.

The catalysed reaction is ATP-dependent breakage, passage and rejoining of double-stranded DNA.. In terms of biological role, large subunit of the DNA topoisomerase that untwists superhelical DNA. Controls of topological states of double-stranded DNA by transient breakage and subsequent rejoining of DNA strands. In Escherichia coli (Bacteriophage T4), this protein is DNA topoisomerase large subunit (39).